We begin with the raw amino-acid sequence, 399 residues long: Formate-dependent phosphoribosylglycinamide formyltransferase (399 aa).

Residues 22-23 (EL) and E82 each bind N(1)-(5-phospho-beta-D-ribosyl)glycinamide. ATP is bound by residues R115, K157, 162–167 (SSGKGQ), 197–200 (EAVV), and E205. In terms of domain architecture, ATP-grasp spans 120 to 315 (RLAAEELGLQ…EFELHARAIL (196 aa)). The Mg(2+) site is built by E274 and E286. Residues D293, K362, and 369-370 (RR) contribute to the N(1)-(5-phospho-beta-D-ribosyl)glycinamide site.

It belongs to the PurK/PurT family. In terms of assembly, homodimer.

It carries out the reaction N(1)-(5-phospho-beta-D-ribosyl)glycinamide + formate + ATP = N(2)-formyl-N(1)-(5-phospho-beta-D-ribosyl)glycinamide + ADP + phosphate + H(+). The protein operates within purine metabolism; IMP biosynthesis via de novo pathway; N(2)-formyl-N(1)-(5-phospho-D-ribosyl)glycinamide from N(1)-(5-phospho-D-ribosyl)glycinamide (formate route): step 1/1. In terms of biological role, involved in the de novo purine biosynthesis. Catalyzes the transfer of formate to 5-phospho-ribosyl-glycinamide (GAR), producing 5-phospho-ribosyl-N-formylglycinamide (FGAR). Formate is provided by PurU via hydrolysis of 10-formyl-tetrahydrofolate. This chain is Formate-dependent phosphoribosylglycinamide formyltransferase, found in Thioalkalivibrio sulfidiphilus (strain HL-EbGR7).